The primary structure comprises 276 residues: D-aminoacyl-tRNA deacylase (276 aa).

The protein belongs to the DtdA deacylase family. In terms of assembly, monomer. Zn(2+) serves as cofactor.

It catalyses the reaction a D-aminoacyl-tRNA + H2O = a tRNA + a D-alpha-amino acid + H(+). The enzyme catalyses glycyl-tRNA(Ala) + H2O = tRNA(Ala) + glycine + H(+). Functionally, D-aminoacyl-tRNA deacylase with broad substrate specificity. By recycling D-aminoacyl-tRNA to D-amino acids and free tRNA molecules, this enzyme counteracts the toxicity associated with the formation of D-aminoacyl-tRNA entities in vivo. This is D-aminoacyl-tRNA deacylase from Staphylothermus marinus (strain ATCC 43588 / DSM 3639 / JCM 9404 / F1).